A 447-amino-acid polypeptide reads, in one-letter code: Cysteine--tRNA ligase (447 aa).

A Zn(2+)-binding site is contributed by cysteine 28. The 'HIGH' region motif lies at 30–40 (PTVYNYIHIGN). The Zn(2+) site is built by cysteine 211, histidine 236, and glutamate 240. The 'KMSKS' region motif lies at 268–272 (KMSKS). Lysine 271 contributes to the ATP binding site.

Belongs to the class-I aminoacyl-tRNA synthetase family. Monomer. Requires Zn(2+) as cofactor.

The protein resides in the cytoplasm. It catalyses the reaction tRNA(Cys) + L-cysteine + ATP = L-cysteinyl-tRNA(Cys) + AMP + diphosphate. This is Cysteine--tRNA ligase from Streptococcus pyogenes serotype M1.